The primary structure comprises 438 residues: Acyl-CoA dehydrogenase apdG (438 aa).

It belongs to the acyl-CoA dehydrogenase family. It depends on FAD as a cofactor.

Its pathway is secondary metabolite biosynthesis. Its function is as follows. Acyl-CoA dehydrogenase; part of the gene cluster that mediates the biosynthesis of aspyridones. The polyketide-amino acid backbone preaspyridone A is first assembled by the PKS-NRPS hybrid apdA. The assembly of preaspyridone A is initiated by loading of malonyl-CoA onto apdA, followed by decarboxylation to yield the acetyl starter unit. The growing polyketide chain then elongates into a tetraketide. The adpA PKS module catalyzes three Claisen condensations, as well as beta-keto processing and methylation. Alpha-methylation step during polyketide synthesis is a prerequisite and a key checkpoint for chain transfer between PKS and NRPS modules. The downstream NRPS module contains the condensation (C), adenylation (A), and thiolation (T) domains and catalyzes the incorporation of tyrosine via the formation of the L-tyrosinyl-thioester and the amide linkage between L-tyrosinyl-thioester and the tetraketide. The bimodular assembly line is terminated with a reductase (R) domain that facilitates formation and release of the tetramic acid product. Because apdA lacks a designated enoylreductase (ER) domain, the required activity is provided the enoyl reductase apdC. ApdC appears to operate with different stereoselectivity in different PKS cycle. Combined with apdC, apdA is proposed to synthesize preaspyridone A via about 20 enzymatic steps. A number of oxidative steps performed successively by the cytochrome P450 monooxygenases apdE and apdB are required for the conversion of preaspyridone A to aspyridone A. The cytochrome P450 monooxygenase apdE is responsible for the oxidative dephenylation of preaspyridone A. Finally, the predicted FAD-dependent monooxygenase apdD and the acyl-CoA dehydrogenase apdG may be involved in the transformation of aspyridone A into aspyridone B. The chain is Acyl-CoA dehydrogenase apdG from Emericella nidulans (strain FGSC A4 / ATCC 38163 / CBS 112.46 / NRRL 194 / M139) (Aspergillus nidulans).